Reading from the N-terminus, the 488-residue chain is Pup--protein ligase (488 aa).

Glutamate 33 is a Mg(2+) binding site. Arginine 76 lines the ATP pocket. Residue tyrosine 78 participates in Mg(2+) binding. Aspartate 80 serves as the catalytic Proton acceptor. Glutamate 86 serves as a coordination point for Mg(2+). ATP is bound by residues threonine 89 and tryptophan 453.

The protein belongs to the Pup ligase/Pup deamidase family. Pup-conjugating enzyme subfamily.

It catalyses the reaction ATP + [prokaryotic ubiquitin-like protein]-L-glutamate + [protein]-L-lysine = ADP + phosphate + N(6)-([prokaryotic ubiquitin-like protein]-gamma-L-glutamyl)-[protein]-L-lysine.. It functions in the pathway protein degradation; proteasomal Pup-dependent pathway. It participates in protein modification; protein pupylation. Its function is as follows. Catalyzes the covalent attachment of the prokaryotic ubiquitin-like protein modifier Pup to the proteasomal substrate proteins, thereby targeting them for proteasomal degradation. This tagging system is termed pupylation. The ligation reaction involves the side-chain carboxylate of the C-terminal glutamate of Pup and the side-chain amino group of a substrate lysine. This chain is Pup--protein ligase, found in Bifidobacterium adolescentis (strain ATCC 15703 / DSM 20083 / NCTC 11814 / E194a).